The primary structure comprises 434 residues: Histidinol dehydrogenase (434 aa).

Substrate-binding residues include serine 242, glutamine 264, and histidine 267. 2 residues coordinate Zn(2+): glutamine 264 and histidine 267. Active-site proton acceptor residues include glutamate 332 and histidine 333. Substrate is bound by residues histidine 333, aspartate 366, glutamate 420, and histidine 425. Residue aspartate 366 coordinates Zn(2+). Zn(2+) is bound at residue histidine 425.

The protein belongs to the histidinol dehydrogenase family. The cofactor is Zn(2+).

It catalyses the reaction L-histidinol + 2 NAD(+) + H2O = L-histidine + 2 NADH + 3 H(+). The protein operates within amino-acid biosynthesis; L-histidine biosynthesis; L-histidine from 5-phospho-alpha-D-ribose 1-diphosphate: step 9/9. Catalyzes the sequential NAD-dependent oxidations of L-histidinol to L-histidinaldehyde and then to L-histidine. The chain is Histidinol dehydrogenase from Desulfotalea psychrophila (strain LSv54 / DSM 12343).